The primary structure comprises 576 residues: Aspartate--tRNA ligase (576 aa).

Position 171 (E171) interacts with L-aspartate. The segment at 195-198 (QLFK) is aspartate. R217 is a binding site for L-aspartate. ATP-binding positions include 217-219 (RDE) and Q226. H450 contributes to the L-aspartate binding site. E484 is a binding site for ATP. R491 contacts L-aspartate. 536–539 (GLDR) contacts ATP.

This sequence belongs to the class-II aminoacyl-tRNA synthetase family. Type 1 subfamily. As to quaternary structure, homodimer.

The protein resides in the cytoplasm. The enzyme catalyses tRNA(Asp) + L-aspartate + ATP = L-aspartyl-tRNA(Asp) + AMP + diphosphate. Catalyzes the attachment of L-aspartate to tRNA(Asp) in a two-step reaction: L-aspartate is first activated by ATP to form Asp-AMP and then transferred to the acceptor end of tRNA(Asp). The polypeptide is Aspartate--tRNA ligase (Buchnera aphidicola subsp. Baizongia pistaciae (strain Bp)).